Here is a 984-residue protein sequence, read N- to C-terminus: Ephrin type-B receptor 1 (984 aa).

Positions 1 to 17 are cleaved as a signal peptide; that stretch reads MALDCLLLFLLASAVAA. The Extracellular portion of the chain corresponds to 18–540; sequence MEETLMDTRT…YKSELREQLP (523 aa). One can recognise an Eph LBD domain in the interval 19 to 201; it reads EETLMDTRTA…FFKKCPSIVQ (183 aa). Fibronectin type-III domains follow at residues 322–432 and 433–528; these read VPSG…TNQA and APST…TLTD. Asparagine 334, asparagine 426, and asparagine 480 each carry an N-linked (GlcNAc...) asparagine glycan. The chain crosses the membrane as a helical span at residues 541–563; that stretch reads LIAGSAAAGVVFVVSLVAISIVC. Residues 564–984 are Cytoplasmic-facing; sequence SRKRAYSKEA…QMNQSPSVMA (421 aa). Residue tyrosine 600 is modified to Phosphotyrosine. The region spanning 619 to 882 is the Protein kinase domain; the sequence is VKIEEVIGAG…EIVNTLDKMI (264 aa). Residues 625-633 and lysine 651 each bind ATP; that span reads IGAGEFGEV. Aspartate 744 functions as the Proton acceptor in the catalytic mechanism. The SAM domain occupies 911-975; that stretch reads TAFTTVDDWL…LSSIHSMRVQ (65 aa). Tyrosine 928 carries the post-translational modification Phosphotyrosine; by autocatalysis. Positions 982–984 match the PDZ-binding motif; sequence VMA.

The protein belongs to the protein kinase superfamily. Tyr protein kinase family. Ephrin receptor subfamily. In terms of assembly, heterotetramer upon binding of the ligand. The heterotetramer is composed of an ephrin dimer and a receptor dimer. Oligomerization is probably required to induce biological responses. Interacts with EPHB6; transphosphorylates EPHB6 to form an active signaling complex. Interacts with PICK1. Interacts (through Tyr-594) with NCK1 (via SH2 domain); activates the JUN cascade to regulate cell adhesion. The ligand-activated form interacts (through Tyr-928) with GRB7 and GRB10 (via SH2 domains). The ligand-activated form interacts (residues within the catalytic domain) with GRB2 (via SH2 domain). Interacts with GRB2, SHC1 and SRC; activates the MAPK/ERK cascade to regulate cell migration. Interacts with CBL; regulates receptor degradation through ubiquitination. Interacts with ACP1. In terms of processing, phosphorylated. Autophosphorylation is stimulated by the ligand EFNB1. Required for interaction with SH2 domain-containing interactors, for activation of the MAPK/ERK and JUN signaling cascades and for ubiquitination by CBL. Post-translationally, ubiquitinated; (EFNB1)ligand-induced poly- and/or multi-ubiquitination by CBL is regulated by SRC and leads to lysosomal degradation. As to expression, restricted to brain and testes.

It is found in the cell membrane. The protein resides in the early endosome membrane. Its subcellular location is the cell projection. It localises to the dendrite. The catalysed reaction is L-tyrosyl-[protein] + ATP = O-phospho-L-tyrosyl-[protein] + ADP + H(+). Functionally, receptor tyrosine kinase which binds promiscuously transmembrane ephrin-B family ligands residing on adjacent cells, leading to contact-dependent bidirectional signaling into neighboring cells. The signaling pathway downstream of the receptor is referred to as forward signaling while the signaling pathway downstream of the ephrin ligand is referred to as reverse signaling. Cognate/functional ephrin ligands for this receptor include EFNB1, EFNB2 and EFNB3. During nervous system development, regulates retinal axon guidance redirecting ipsilaterally ventrotemporal retinal ganglion cells axons at the optic chiasm midline. This probably requires repulsive interaction with EFNB2. In the adult nervous system together with EFNB3, regulates chemotaxis, proliferation and polarity of the hippocampus neural progenitors. In addition to its role in axon guidance also plays an important redundant role with other ephrin-B receptors in development and maturation of dendritic spines and synapse formation. May also regulate angiogenesis. More generally, may play a role in targeted cell migration and adhesion. Upon activation by EFNB1 and probably other ephrin-B ligands activates the MAPK/ERK and the JNK signaling cascades to regulate cell migration and adhesion respectively. Involved in the maintenance of the pool of satellite cells (muscle stem cells) by promoting their self-renewal and reducing their activation and differentiation. The chain is Ephrin type-B receptor 1 (Ephb1) from Rattus norvegicus (Rat).